Here is a 368-residue protein sequence, read N- to C-terminus: Quinolinate synthase (368 aa).

Positions 46 and 63 each coordinate iminosuccinate. Cys-110 lines the [4Fe-4S] cluster pocket. Iminosuccinate is bound by residues 141 to 143 (YVN) and Ser-162. Cys-230 serves as a coordination point for [4Fe-4S] cluster. Iminosuccinate is bound by residues 256–258 (HPE) and Thr-273. [4Fe-4S] cluster is bound at residue Cys-320.

The protein belongs to the quinolinate synthase family. Type 3 subfamily. [4Fe-4S] cluster serves as cofactor.

The protein resides in the cytoplasm. The catalysed reaction is iminosuccinate + dihydroxyacetone phosphate = quinolinate + phosphate + 2 H2O + H(+). Its pathway is cofactor biosynthesis; NAD(+) biosynthesis; quinolinate from iminoaspartate: step 1/1. Catalyzes the condensation of iminoaspartate with dihydroxyacetone phosphate to form quinolinate. This is Quinolinate synthase from Bacillus cereus (strain B4264).